An 81-amino-acid polypeptide reads, in one-letter code: Sulfur carrier protein TusA (81 aa).

Catalysis depends on C19, which acts as the Cysteine persulfide intermediate.

Belongs to the sulfur carrier protein TusA family. Interacts with IscS.

The protein resides in the cytoplasm. The protein operates within tRNA modification. Its function is as follows. Sulfur carrier protein involved in sulfur trafficking in the cell. Part of a sulfur-relay system required for 2-thiolation during synthesis of 2-thiouridine of the modified wobble base 5-methylaminomethyl-2-thiouridine (mnm(5)s(2)U) in tRNA. Interacts with IscS and stimulates its cysteine desulfurase activity. Accepts an activated sulfur from IscS, which is then transferred to TusD, and thus determines the direction of sulfur flow from IscS to 2-thiouridine formation. Also appears to be involved in sulfur transfer for the biosynthesis of molybdopterin. This Salmonella choleraesuis (strain SC-B67) protein is Sulfur carrier protein TusA.